A 62-amino-acid chain; its full sequence is Omega-conotoxin-like Bu11 (62 aa).

An N-terminal signal peptide occupies residues alanine 1 to alanine 7. A propeptide spanning residues glutamate 8–lysine 27 is cleaved from the precursor. 3 cysteine pairs are disulfide-bonded: cysteine 31–cysteine 46, cysteine 38–cysteine 49, and cysteine 45–cysteine 56.

It belongs to the conotoxin O1 superfamily. In terms of tissue distribution, expressed by the venom duct.

The protein resides in the secreted. Its function is as follows. Omega-conotoxins act at presynaptic membranes, they bind and block voltage-gated calcium channels (Cav). The sequence is that of Omega-conotoxin-like Bu11 from Conus bullatus (Bubble cone).